The chain runs to 198 residues: Recombination protein RecR (198 aa).

A C4-type zinc finger spans residues 57–72 (CDKCNTFTEAQICEVC). A Toprim domain is found at 80-175 (TLLCVVETPA…AVTRLARGVP (96 aa)).

The protein belongs to the RecR family.

May play a role in DNA repair. It seems to be involved in an RecBC-independent recombinational process of DNA repair. It may act with RecF and RecO. This is Recombination protein RecR from Burkholderia multivorans (strain ATCC 17616 / 249).